A 233-amino-acid polypeptide reads, in one-letter code: Leucyl/phenylalanyl-tRNA--protein transferase (233 aa).

Belongs to the L/F-transferase family.

It localises to the cytoplasm. The enzyme catalyses N-terminal L-lysyl-[protein] + L-leucyl-tRNA(Leu) = N-terminal L-leucyl-L-lysyl-[protein] + tRNA(Leu) + H(+). The catalysed reaction is N-terminal L-arginyl-[protein] + L-leucyl-tRNA(Leu) = N-terminal L-leucyl-L-arginyl-[protein] + tRNA(Leu) + H(+). It carries out the reaction L-phenylalanyl-tRNA(Phe) + an N-terminal L-alpha-aminoacyl-[protein] = an N-terminal L-phenylalanyl-L-alpha-aminoacyl-[protein] + tRNA(Phe). Functions in the N-end rule pathway of protein degradation where it conjugates Leu, Phe and, less efficiently, Met from aminoacyl-tRNAs to the N-termini of proteins containing an N-terminal arginine or lysine. The sequence is that of Leucyl/phenylalanyl-tRNA--protein transferase from Shewanella denitrificans (strain OS217 / ATCC BAA-1090 / DSM 15013).